Reading from the N-terminus, the 1404-residue chain is Microtubule organization protein AKNA (1404 aa).

2 disordered regions span residues 1-304 (MASS…VSPL) and 317-382 (QHKQ…RPLI). Position 51 is a phosphoserine (Ser51). The segment covering 70-91 (WDPDMQDSEESSGEETEADDAS) has biased composition (acidic residues). Residues 185–203 (KSWSSGTVSLRQPSDSLGS) show a composition bias toward polar residues. Ser302 is modified (phosphoserine). A phosphoserine mark is found at Ser485 and Ser520. The interval 494-549 (AEWWPDPAQDPQASEATGWPFPRTDLSPSSSPGVATPGRLPQSQGIATDQPSTGQT) is disordered. The segment covering 534–549 (PQSQGIATDQPSTGQT) has biased composition (polar residues). Phosphoserine is present on Ser617. Residues 645 to 659 (MDQTQRETEPCRPDL) show a composition bias toward basic and acidic residues. The disordered stretch occupies residues 645-708 (MDQTQRETEP…TSPGSSCTLP (64 aa)). 2 stretches are compositionally biased toward polar residues: residues 660–674 (QDST…QSAH) and 686–707 (DGQT…SCTL). Phosphoserine is present on residues Ser750 and Ser753. Positions 754 to 787 (LPEALRDEDEDDLEEEEEEQDHQGPLEVDSPATA) are PEST. Disordered regions lie at residues 755–1038 (PEAL…STAN) and 1085–1185 (HSTQ…RERV). Acidic residues predominate over residues 759–773 (RDEDEDDLEEEEEEQ). The span at 803 to 813 (TQAEESHRDAT) shows a compositional bias: basic and acidic residues. Phosphoserine occurs at positions 831 and 860. The interval 885–906 (HTEEPWMVSPETDSGFVGSETS) is PEST. Polar residues-rich tracts occupy residues 903-914 (SETSIVSPFTQT), 921-933 (HVST…QHLT), and 963-974 (SRTQQHFSSLSS). Phosphoserine is present on Ser971. Residues 1015-1029 (TSPDSAPAPTAASTP) show a composition bias toward low complexity. The segment covering 1085-1098 (HSTQTQEKLGSSPS) has biased composition (polar residues). Residues 1088 to 1096 (QTQEKLGSS) constitute a DNA-binding region (a.T hook). 2 positions are modified to phosphoserine: Ser1144 and Ser1145. Positions 1155 to 1167 (SSEKSRTFEEHPE) are enriched in basic and acidic residues. Ser1200 is modified (phosphoserine). Disordered regions lie at residues 1208-1235 (SGTP…TTRG) and 1253-1286 (SAEA…QTGS). The segment covering 1221–1235 (TQDTGSAVSRDTTRG) has biased composition (polar residues). Phosphoserine is present on residues Ser1339, Ser1352, and Ser1389.

The protein belongs to the AKNA family. Interacts with DCTN1. Interacts with MAPRE1/EB1. Interacts with ODF2. Interacts with CAMSAP3. Post-translationally, phosphorylated; phosphorylation regulates dissociation from and reassembly at the centrosome. In terms of tissue distribution, expressed in neural stem cells isolated at the peak of subventricular zone (SVZ): localizes at the subdistal appendages of the mother centriole in specific subtypes of neural stem cells and in almost all basal progenitors.

The protein resides in the cytoplasm. Its subcellular location is the cytoskeleton. The protein localises to the microtubule organizing center. It localises to the centrosome. It is found in the centriole. The protein resides in the nucleus. Functionally, centrosomal protein that plays a key role in cell delamination by regulating microtubule organization. Required for the delamination and retention of neural stem cells from the subventricular zone during neurogenesis. Also regulates the epithelial-to-mesenchymal transition in other epithelial cells. Acts by increasing centrosomal microtubule nucleation and recruiting nucleation factors and minus-end stabilizers, thereby destabilizing microtubules at the adherens junctions and mediating constriction of the apical endfoot. In addition, may also act as a transcription factor that specifically activates the expression of the CD40 receptor and its ligand CD40L/CD154, two cell surface molecules on lymphocytes that are critical for antigen-dependent-B-cell development. Binds to A/T-rich promoters. It is unclear how it can both act as a microtubule organizer and as a transcription factor; additional evidences are required to reconcile these two apparently contradictory functions. The sequence is that of Microtubule organization protein AKNA from Mus musculus (Mouse).